Here is a 1056-residue protein sequence, read N- to C-terminus: E3 SUMO-protein ligase ZNF451 (1056 aa).

Residues 1–39 (MGDPGPEIIESVPPAGPEASESTTDENEDDIQFVSEGPL) are disordered. Positions 1–246 (MGDPGPEIIE…AADGHSNSLL (246 aa)) are sufficient for E3 SUMO-protein ligase activity. The important for interaction with SUMO1 and SUMO2 stretch occupies residues 1 to 344 (MGDPGPEIIE…RVRCQNAGPV (344 aa)). The tract at residues 30 to 37 (DIQFVSEG) is interaction with SUMO2 1. Residues 38 to 41 (PLRP) carry the PLRP motif. Residues 42 to 50 (VLEYIDLVS) form an interaction with SUMO2 2 region. Glycyl lysine isopeptide (Lys-Gly) (interchain with G-Cter in SUMO2) cross-links involve residues lysine 75, lysine 77, lysine 106, lysine 139, and lysine 153. The residue at position 155 (serine 155) is a Phosphoserine. Arginine 158 is modified (omega-N-methylarginine). Lysine 167 is covalently cross-linked (Glycyl lysine isopeptide (Lys-Gly) (interchain with G-Cter in SUMO2)). The interval 168 to 521 (PILCPIMHCN…HMSRFHGGAH (354 aa)) is important for interaction with SMAD4. A C2H2-type 1 zinc finger spans residues 169 to 195 (ILCPIMHCNKEFDNGHLLLGHLKRFDH). A C2H2-type 2; degenerate zinc finger spans residues 212–234 (FACAVCYEHFVTQQQYKDHLLSR). The C2H2-type 3 zinc finger occupies 253 to 277 (YACPQCFLLFSTKDECLKHMSTKNH). Residues lysine 270, lysine 275, lysine 283, lysine 288, lysine 301, and lysine 309 each participate in a glycyl lysine isopeptide (Lys-Gly) (interchain with G-Cter in SUMO2) cross-link. A C2H2-type 4; atypical zinc finger spans residues 315 to 338 (VKCVACHQTLRSHMELTAHFRVRC). The segment at 362 to 385 (GYCSDCNQVFMDVASTQSHKNSGH) adopts a C2H2-type 5 zinc-finger fold. Lysine 420 is covalently cross-linked (Glycyl lysine isopeptide (Lys-Gly) (interchain with G-Cter in SUMO2)). Serine 429 is subject to Phosphoserine. A Glycyl lysine isopeptide (Lys-Gly) (interchain with G-Cter in SUMO2) cross-link involves residue lysine 431. 2 C2H2-type zinc fingers span residues 494–517 (YKCVVCGKVCEDSGVMRLHMSRFH) and 527–550 (FWCRTCKKELVKKDAIMAHITEFH). Residues lysine 539 and lysine 583 each participate in a glycyl lysine isopeptide (Lys-Gly) (interchain with G-Cter in SUMO2) cross-link. A C2H2-type 8; atypical zinc finger spans residues 604–629 (WQCRICEDMFESQECVKQHCMSLTSH). 2 consecutive C2H2-type zinc fingers follow at residues 634–657 (YSCAHCRKTFHKVETLYRHCQDEH) and 665–688 (YFCGLCDLIFNKEEEFLSHYKEHH). Lysine 645 is covalently cross-linked (Glycyl lysine isopeptide (Lys-Gly) (interchain with G-Cter in SUMO2)). Lysine 704 participates in a covalent cross-link: Glycyl lysine isopeptide (Lys-Gly) (interchain with G-Cter in SUMO1); alternate. Lysine 704 is covalently cross-linked (Glycyl lysine isopeptide (Lys-Gly) (interchain with G-Cter in SUMO2); alternate). Residues lysine 729 and lysine 746 each participate in a glycyl lysine isopeptide (Lys-Gly) (interchain with G-Cter in SUMO2) cross-link. 2 C2H2-type zinc fingers span residues 751–774 (FRCSSCSATAQNVTDINTHVCQVH) and 787–810 (IKCGICTKAFQNTESAQQHFHRKH). Residues lysine 788, lysine 815, lysine 843, lysine 849, lysine 947, lysine 988, and lysine 989 each participate in a glycyl lysine isopeptide (Lys-Gly) (interchain with G-Cter in SUMO2) cross-link. 2 disordered regions span residues 806–830 (FHRKHAALQKPTATPGGANRSSTCQ) and 839–858 (EKNLKQPSSQKHSDVEKGAE). Residues 849–858 (KHSDVEKGAE) are compositionally biased toward basic and acidic residues. A disordered region spans residues 1019–1045 (KECDSDDSSGMKGSPAEELRATEDVEL). Basic and acidic residues predominate over residues 1033-1045 (PAEELRATEDVEL). Residues 1045–1056 (LEEAIRRSLEEM) form an important for ubiquitin binding region.

Belongs to the krueppel C2H2-type zinc-finger protein family. Homooligomer. Interacts (via N-terminal region) with SUMO1. Interacts (via N-terminal region) with SUMO2. Interacts simultaneously with two SUMO2 chains. Identified in a complex with SUMO2 and UBE2I/UBC9, where one ZNF451 interacts with one UBE2I/UBC9 and two SUMO2 chains, one bound to the UBE2I/UBC9 active site and the other to another region of the same UBE2I/UBC9 molecule. Interacts (via C-terminus) with ubiquitin. Interacts (via N-terminal zinc-finger domains) with SMAD4 (via MH2 domain). Interacts with SMAD2 and SMAD3. Identified in a complex that contains at least ZNF451, SMAD2, SMAD3 and SMAD4. Interacts with EP300. Inhibits interaction between EP300 and the SMAD4 complex. Interacts with SIMC1. Post-translationally, sumoylated. Predominantly sumoylated on the N-terminal region that is important for interaction with SUMO1 and SUMO2. Sumoylation is important for localization in nuclear granules; desumoylation leads to diffuse nucleoplasmic location. Autosumoylated (in vitro). Sumoylation enhances E3 SUMO-protein ligase activity.

The protein localises to the nucleus. It localises to the PML body. The protein resides in the nucleoplasm. It functions in the pathway protein modification; protein sumoylation. Its function is as follows. E3 SUMO-protein ligase; has a preference for SUMO2 and SUMO3 and facilitates UBE2I/UBC9-mediated sumoylation of target proteins. Plays a role in protein SUMO2 modification in response to stress caused by DNA damage and by proteasome inhibitors (in vitro). Required for MCM4 sumoylation. Has no activity with SUMO1. Preferentially transfers an additional SUMO2 chain onto the SUMO2 consensus site 'Lys-11'. Negatively regulates transcriptional activation mediated by the SMAD4 complex in response to TGF-beta signaling. Inhibits EP300-mediated acetylation of histone H3 at 'Lys-9'. Plays a role in regulating the transcription of AR targets. This is E3 SUMO-protein ligase ZNF451 (Znf451) from Mus musculus (Mouse).